The chain runs to 119 residues: Large ribosomal subunit protein uL18 (119 aa).

Belongs to the universal ribosomal protein uL18 family. In terms of assembly, part of the 50S ribosomal subunit; part of the 5S rRNA/L5/L18/L25 subcomplex. Contacts the 5S and 23S rRNAs.

In terms of biological role, this is one of the proteins that bind and probably mediate the attachment of the 5S RNA into the large ribosomal subunit, where it forms part of the central protuberance. This Xanthomonas campestris pv. campestris (strain 8004) protein is Large ribosomal subunit protein uL18.